Reading from the N-terminus, the 152-residue chain is Endoribonuclease YbeY (152 aa).

Zn(2+) is bound by residues H114, H118, and H124.

Belongs to the endoribonuclease YbeY family. The cofactor is Zn(2+).

The protein localises to the cytoplasm. Functionally, single strand-specific metallo-endoribonuclease involved in late-stage 70S ribosome quality control and in maturation of the 3' terminus of the 16S rRNA. The polypeptide is Endoribonuclease YbeY (Coxiella burnetii (strain CbuK_Q154) (Coxiella burnetii (strain Q154))).